A 644-amino-acid polypeptide reads, in one-letter code: 3-isopropylmalate dehydratase (644 aa).

Positions 400, 460, and 463 each coordinate [4Fe-4S] cluster. The segment at 521-568 (SEIPGTPKQSPRQEVVAEFESEEDDVDSSSVDSAPVATPPSTGDSAGM) is disordered. Residues 537 to 547 (AEFESEEDDVD) are compositionally biased toward acidic residues.

Belongs to the aconitase/IPM isomerase family. Monomer. [4Fe-4S] cluster serves as cofactor.

The catalysed reaction is (2R,3S)-3-isopropylmalate = (2S)-2-isopropylmalate. The protein operates within amino-acid biosynthesis; L-leucine biosynthesis; L-leucine from 3-methyl-2-oxobutanoate: step 2/4. Its function is as follows. Catalyzes the isomerization between 2-isopropylmalate and 3-isopropylmalate, via the formation of 2-isopropylmaleate. This is 3-isopropylmalate dehydratase (LEUA) from Mucor circinelloides f. lusitanicus (Mucor racemosus var. lusitanicus).